Here is a 481-residue protein sequence, read N- to C-terminus: Chromosomal replication initiator protein DnaA (481 aa).

Residues 1–71 form a domain I, interacts with DnaA modulators region; the sequence is MTDLSAFWPQ…ETFAEDILGR (71 aa). The interval 71-143 is domain II; it reads RPVTIELRIG…PAIGGGHEST (73 aa). The span at 86–96 shows a compositional bias: low complexity; that stretch reads ASAPAAASPRS. The interval 86–110 is disordered; sequence ASAPAAASPRSPGRPAPAPVAATPT. A domain III, AAA+ region region spans residues 144 to 361; sequence RLNPAFTFES…GALKRVVAYS (218 aa). Positions 189, 191, 192, and 193 each coordinate ATP. Residues 362-481 are domain IV, binds dsDNA; the sequence is RFSNQPISLD…YAALQQMLRN (120 aa).

Belongs to the DnaA family. As to quaternary structure, oligomerizes as a right-handed, spiral filament on DNA at oriC.

Its subcellular location is the cytoplasm. Functionally, plays an essential role in the initiation and regulation of chromosomal replication. ATP-DnaA binds to the origin of replication (oriC) to initiate formation of the DNA replication initiation complex once per cell cycle. Binds the DnaA box (a 9 base pair repeat at the origin) and separates the double-stranded (ds)DNA. Forms a right-handed helical filament on oriC DNA; dsDNA binds to the exterior of the filament while single-stranded (ss)DNA is stabiized in the filament's interior. The ATP-DnaA-oriC complex binds and stabilizes one strand of the AT-rich DNA unwinding element (DUE), permitting loading of DNA polymerase. After initiation quickly degrades to an ADP-DnaA complex that is not apt for DNA replication. Binds acidic phospholipids. The polypeptide is Chromosomal replication initiator protein DnaA (Laribacter hongkongensis (strain HLHK9)).